A 387-amino-acid chain; its full sequence is Galactokinase (387 aa).

33 to 36 (EHID) is a binding site for substrate. ATP-binding positions include Ser67 and 124 to 130 (GAGLSSS). Positions 130 and 162 each coordinate Mg(2+). The Proton acceptor role is filled by Asp174. Tyr224 contributes to the substrate binding site.

The protein belongs to the GHMP kinase family. GalK subfamily.

It localises to the cytoplasm. The catalysed reaction is alpha-D-galactose + ATP = alpha-D-galactose 1-phosphate + ADP + H(+). It participates in carbohydrate metabolism; galactose metabolism. Functionally, catalyzes the transfer of the gamma-phosphate of ATP to D-galactose to form alpha-D-galactose-1-phosphate (Gal-1-P). This chain is Galactokinase, found in Clostridium perfringens (strain ATCC 13124 / DSM 756 / JCM 1290 / NCIMB 6125 / NCTC 8237 / Type A).